We begin with the raw amino-acid sequence, 428 residues long: Histidine--tRNA ligase (428 aa).

Belongs to the class-II aminoacyl-tRNA synthetase family. In terms of assembly, homodimer.

It localises to the cytoplasm. The catalysed reaction is tRNA(His) + L-histidine + ATP = L-histidyl-tRNA(His) + AMP + diphosphate + H(+). The sequence is that of Histidine--tRNA ligase from Ectopseudomonas mendocina (strain ymp) (Pseudomonas mendocina).